Here is an 82-residue protein sequence, read N- to C-terminus: MAAGSTGERPFFEIITSVRYWIIHAVTLPAIFIAGFLFVSTGLAYDAFGTPRPDTYFQASESKAPVVSQRFESKAQLDLRLK.

A helical membrane pass occupies residues 22-36 (IIHAVTLPAIFIAGF). Histidine 24 lines the heme pocket.

The protein belongs to the PsbE/PsbF family. In terms of assembly, heterodimer of an alpha subunit and a beta subunit. PSII is composed of 1 copy each of membrane proteins PsbA, PsbB, PsbC, PsbD, PsbE, PsbF, PsbH, PsbI, PsbJ, PsbK, PsbL, PsbM, PsbT, PsbX, PsbY, Psb30/Ycf12, peripheral proteins PsbO, CyanoQ (PsbQ), PsbU, PsbV and a large number of cofactors. It forms dimeric complexes. The cofactor is heme b.

The protein localises to the cellular thylakoid membrane. Its function is as follows. This b-type cytochrome is tightly associated with the reaction center of photosystem II (PSII). PSII is a light-driven water:plastoquinone oxidoreductase that uses light energy to abstract electrons from H(2)O, generating O(2) and a proton gradient subsequently used for ATP formation. It consists of a core antenna complex that captures photons, and an electron transfer chain that converts photonic excitation into a charge separation. This chain is Cytochrome b559 subunit alpha, found in Prochlorococcus marinus (strain MIT 9211).